Here is a 903-residue protein sequence, read N- to C-terminus: DNA mismatch repair protein MutS (903 aa).

Residues 1–89 (MPRSASQPPD…DEPAWGHHSQ (89 aa)) are disordered. Composition is skewed to low complexity over residues 20-36 (APEP…SEPE) and 49-62 (ADAA…QATA). 719 to 726 (GPNASGKS) is an ATP binding site.

This sequence belongs to the DNA mismatch repair MutS family.

Its function is as follows. This protein is involved in the repair of mismatches in DNA. It is possible that it carries out the mismatch recognition step. This protein has a weak ATPase activity. This Synechococcus sp. (strain CC9605) protein is DNA mismatch repair protein MutS.